The primary structure comprises 302 residues: RNA polymerase II holoenzyme cyclin-like subunit (302 aa).

The 90-residue stretch at 53–142 (QQLIKLGKRM…VGECEFSLIS (90 aa)) folds into the Cyclin N-terminal domain.

This sequence belongs to the cyclin family. Cyclin C subfamily. Component of the srb8-11 complex, a regulatory module of the Mediator complex.

It localises to the nucleus. Component of the srb8-11 complex. The srb8-11 complex is a regulatory module of the Mediator complex which is itself involved in regulation of basal and activated RNA polymerase II-dependent transcription. The srb8-11 complex may be involved in the transcriptional repression of a subset of genes regulated by Mediator. It may inhibit the association of the Mediator complex with RNA polymerase II to form the holoenzyme complex. The srb8-11 complex phosphorylates the C-terminal domain (CTD) of the largest subunit of RNA polymerase II. The chain is RNA polymerase II holoenzyme cyclin-like subunit (ssn8) from Emericella nidulans (strain FGSC A4 / ATCC 38163 / CBS 112.46 / NRRL 194 / M139) (Aspergillus nidulans).